The primary structure comprises 261 residues: Transcription factor BEE 3 (261 aa).

Positions Asn72–Gln82 are enriched in low complexity. 2 disordered regions span residues Asn72–His158 and Val242–Leu261. Residues Val95–Lys123 are compositionally biased toward polar residues. Over residues Asn135–His146 the composition is skewed to basic and acidic residues. A bHLH domain is found at Gln153–Leu203.

Homodimer. In terms of tissue distribution, expressed in stems.

The protein localises to the nucleus. In terms of biological role, positive regulator of brassinosteroid signaling. In Arabidopsis thaliana (Mouse-ear cress), this protein is Transcription factor BEE 3 (BEE3).